We begin with the raw amino-acid sequence, 237 residues long: Class B acid phosphatase (237 aa).

The signal sequence occupies residues Met-1–Ala-23. Asp-69 acts as the Nucleophile in catalysis. 2 residues coordinate Mg(2+): Asp-69 and Asp-71. Asp-71 functions as the Proton donor in the catalytic mechanism. Residues Thr-137–Gly-138 and Lys-177 contribute to the substrate site. Asp-192 lines the Mg(2+) pocket.

Belongs to the class B bacterial acid phosphatase family. In terms of assembly, homotetramer. The cofactor is Mg(2+).

The protein localises to the periplasm. It catalyses the reaction a phosphate monoester + H2O = an alcohol + phosphate. Dephosphorylates several organic phosphate monoesters. Also has a phosphotransferase activity catalyzing the transfer of low-energy phosphate groups from organic phosphate monoesters to free hydroxyl groups of various organic compounds. In Salmonella arizonae (strain ATCC BAA-731 / CDC346-86 / RSK2980), this protein is Class B acid phosphatase.